We begin with the raw amino-acid sequence, 123 residues long: Large ribosomal subunit protein bL12 (123 aa).

It belongs to the bacterial ribosomal protein bL12 family. Homodimer. Part of the ribosomal stalk of the 50S ribosomal subunit. Forms a multimeric L10(L12)X complex, where L10 forms an elongated spine to which 2 to 4 L12 dimers bind in a sequential fashion. Binds GTP-bound translation factors.

In terms of biological role, forms part of the ribosomal stalk which helps the ribosome interact with GTP-bound translation factors. Is thus essential for accurate translation. The chain is Large ribosomal subunit protein bL12 from Acholeplasma laidlawii (strain PG-8A).